Here is a 922-residue protein sequence, read N- to C-terminus: Protein translocase subunit SecA (922 aa).

Residues Gln-87, 105–109 (GEGKT), and Asp-516 contribute to the ATP site. The disordered stretch occupies residues 867 to 912 (YTAPTETGEPETLPDPRTAGAGGDGLNLPEGVRIGRNDPCPCGSGK). Zn(2+)-binding residues include Cys-906, Cys-908, Cys-917, and His-918.

Belongs to the SecA family. In terms of assembly, monomer and homodimer. Part of the essential Sec protein translocation apparatus which comprises SecA, SecYEG and auxiliary proteins SecDF-YajC and YidC. The cofactor is Zn(2+).

Its subcellular location is the cell inner membrane. It localises to the cytoplasm. The enzyme catalyses ATP + H2O + cellular proteinSide 1 = ADP + phosphate + cellular proteinSide 2.. In terms of biological role, part of the Sec protein translocase complex. Interacts with the SecYEG preprotein conducting channel. Has a central role in coupling the hydrolysis of ATP to the transfer of proteins into and across the cell membrane, serving both as a receptor for the preprotein-SecB complex and as an ATP-driven molecular motor driving the stepwise translocation of polypeptide chains across the membrane. In Paracidovorax citrulli (strain AAC00-1) (Acidovorax citrulli), this protein is Protein translocase subunit SecA.